We begin with the raw amino-acid sequence, 122 residues long: Ribosome-binding factor A (122 aa).

It belongs to the RbfA family. In terms of assembly, monomer. Binds 30S ribosomal subunits, but not 50S ribosomal subunits or 70S ribosomes.

It is found in the cytoplasm. In terms of biological role, one of several proteins that assist in the late maturation steps of the functional core of the 30S ribosomal subunit. Associates with free 30S ribosomal subunits (but not with 30S subunits that are part of 70S ribosomes or polysomes). Required for efficient processing of 16S rRNA. May interact with the 5'-terminal helix region of 16S rRNA. The polypeptide is Ribosome-binding factor A (Polaromonas sp. (strain JS666 / ATCC BAA-500)).